Reading from the N-terminus, the 320-residue chain is Probable 5-dehydro-4-deoxyglucarate dehydratase (320 aa).

This sequence belongs to the DapA family.

The enzyme catalyses 5-dehydro-4-deoxy-D-glucarate + H(+) = 2,5-dioxopentanoate + CO2 + H2O. Its pathway is carbohydrate acid metabolism; D-glucarate degradation; 2,5-dioxopentanoate from D-glucarate: step 2/2. The polypeptide is Probable 5-dehydro-4-deoxyglucarate dehydratase (Streptomyces griseus subsp. griseus (strain JCM 4626 / CBS 651.72 / NBRC 13350 / KCC S-0626 / ISP 5235)).